Consider the following 36-residue polypeptide: uncharacterized protein (36 aa).

This is an uncharacterized protein from Archaeoglobus fulgidus (strain ATCC 49558 / DSM 4304 / JCM 9628 / NBRC 100126 / VC-16).